Consider the following 801-residue polypeptide: MPLVPLEHLDEVREELVKARKSRHRRLLVITGDDDSRLVTTALDFIYNVKDLLSGEKVLYTYHAFYSDGAMRKELFEKGVPRELSVDYVSYHKLDEVLGRTYAAAVADLVNNLEPNDLGRVMGVVEGGGLYIFLLPSFTRLLETVTRFQSNLIVPGYTDKDLKRYFEKRFIKKVMEHQGVAVYDADNRYWVKKFGKTPSTPYARPKPVLPQKSKIPVKVFNLALTQDQVEVLKIFEHFYAKAEKEKLVFVLTADRGRGKSSAVGLGVGWLAHRLRRAKGKCKVVVTAPAVTNVQEVFRFSAAVLDLFKHKVEVLEDESGMITKLLSKGIEIEYVTPLDVLKAKGDLLVVDEAASIPVPLLFKMLKRFNKVVYSSTIHGYEGAGRGFSLRFLKRLKNEEGVKLYEYEMSEPIRYAPEDPIEKWTFDLLLLDAEPCEITEDDLSLVSAGEVYYDAPNEEELFLKNEEELRQFFGIYIMAHYRNNPNDLGIMMDAPHHFLRMVRLKNGKIVVSLELASEGNLGEDLSKESAKGAWLMGNIIPDRLIKHYKILDFGNLRGIRVVRIATHPSVMGKGLGSFALSRLEEEARRNGYDWVGAGFGVTYELLKFWLKNGYIPVHMSPEKNPVSGEYTVIVVKPLSEKAKRIVDVIAKEFKQKLLGSLASPYFDLEPEVALLLLKSTPSFEVKVNLTKLQLARFLTYAWSDMTLENCIDVVGIMTRLYFLSKKKPSLSELQELLLVSKILQAKSWHLTCQELNLSLAEATSNMKQIAQIFSKEFLGVNSEEEALRYFFLRMDDLNEGVSA.

ATP-binding positions include Gln228, 256–265, and Arg412; that span reads GRGKSSAVGL. One can recognise an N-acetyltransferase domain in the interval 457-637; the sequence is EELFLKNEEE…YTVIVVKPLS (181 aa). Residues 562–564, 569–575, and Glu602 contribute to the acetyl-CoA site; these read IAT and MGKGLGS.

This sequence belongs to the RNA cytidine acetyltransferase family. TmcA subfamily.

It is found in the cytoplasm. The catalysed reaction is cytidine(34) in elongator tRNA(Met) + acetyl-CoA + ATP + H2O = N(4)-acetylcytidine(34) in elongator tRNA(Met) + ADP + phosphate + CoA + H(+). Functionally, catalyzes the formation of N(4)-acetylcytidine (ac(4)C) at the wobble position of tRNA(Met), by using acetyl-CoA as an acetyl donor and ATP (or GTP). The chain is tRNA(Met) cytidine acetyltransferase TmcA from Thermofilum pendens (strain DSM 2475 / Hrk 5).